Consider the following 146-residue polypeptide: Putative phosphotransferase enzyme IIA component YadI (146 aa).

The PTS EIIA type-4 domain occupies 1 to 124 (MLGWVITCHD…RIVELGAPEV (124 aa)). Residue His9 is the Tele-phosphohistidine intermediate of the active site.

The protein localises to the cytoplasm. Its function is as follows. The phosphoenolpyruvate-dependent sugar phosphotransferase system (sugar PTS), a major carbohydrate active -transport system, catalyzes the phosphorylation of incoming sugar substrates concomitantly with their translocation across the cell membrane. The protein is Putative phosphotransferase enzyme IIA component YadI (yadI) of Escherichia coli (strain K12).